We begin with the raw amino-acid sequence, 197 residues long: Guanylyl cyclase-activating protein 2 (197 aa).

Gly2 is lipidated: N-myristoyl glycine. EF-hand domains lie at 15-50, 51-86, 87-122, and 138-173; these read DVAE…QDNQ, EAAD…VLRG, KLEH…IYNL, and SPEQ…DKWV. Ca(2+) contacts are provided by Asp64, Asn66, Asp68, Thr70, Glu75, Asp100, Asp102, Asn104, Cys106, Glu111, Asp151, Asn153, Asp155, Gln157, and Glu162.

As to expression, low expression in retina.

Its function is as follows. Stimulates guanylyl cyclase 1 (GC1) and GC2 when free calcium ions concentration is low and inhibits guanylyl cyclases when free calcium ions concentration is elevated. This Ca(2+)-sensitive regulation of guanylyl cyclase (GC) is a key event in recovery of the dark state of rod photoreceptors following light exposure. In Lithobates pipiens (Northern leopard frog), this protein is Guanylyl cyclase-activating protein 2 (GUCA1B).